The sequence spans 418 residues: Equilibrative nucleotide transporter 6 (418 aa).

A run of 11 helical transmembrane segments spans residues 19 to 39 (AMIVYCILGFGSLISWNSMLT), 56 to 76 (VLTLVYQPFAFGAIVILAYHE), 86 to 106 (LIGYILYTISTFLLIVLDLAT), 112 to 132 (FGPYTGLCAVVAAFGLADATV), 142 to 162 (LMCPELVQSYMGGMAVAGALT), 186 to 206 (MFLAISTCIELLSVMLYAYVL), 264 to 284 (HAVNLFLIYVCTLSIFPGFLY), 291 to 311 (GLGAWYALVLVAMYNCWDLVG), 326 to 346 (KLITIAVLSRYLLIPAFYFTA), 353 to 373 (WMIMLVSVLGLTNGHLTVCIM), and 392 to 412 (LVIFLLGGIFAGVALDWLWLI).

The protein belongs to the SLC29A/ENT transporter (TC 2.A.57) family. In terms of tissue distribution, expressed in leaves and siliques.

The protein localises to the cell membrane. In terms of biological role, nucleoside transporter that can mediate uptake of adenosine, uridine, guanosine or cytidine when expressed in a heterologous system (yeast). The chain is Equilibrative nucleotide transporter 6 (ENT6) from Arabidopsis thaliana (Mouse-ear cress).